A 617-amino-acid chain; its full sequence is Type VII secretion systems protein EssD (617 aa).

A disordered region spans residues 420-448; it reads QNHVTHGPKDSMVRSEGKHSISSHEMNSS. The span at 426–438 shows a compositional bias: basic and acidic residues; sequence GPKDSMVRSEGKH.

Belongs to the EssD family. Interacts (via C-terminal) with EssG; this interaction blocks EssD activity. Interacts with EssE.

It localises to the secreted. Its subcellular location is the cell membrane. In terms of biological role, component of the type VII secretion system (Ess). Plays a role in Ess secretion during infection. Required for the efficient secretion of EsxA. Required for abscess formation and staphylococcal persistence in host tissue. Possesses a toxic DNase activity that is modulated by EssG by forming a nuclease toxin-antitoxin pair. This nuclease toxin targets competitor bacteria. The chain is Type VII secretion systems protein EssD from Staphylococcus aureus (strain Newman).